The following is a 189-amino-acid chain: Ras-like protein 1 (189 aa).

10–17 (GAGGVGKS) is a binding site for GTP. The Effector region motif lies at 32–40 (YDPTIEDSY). GTP is bound by residues 57–61 (DTAGQ) and 116–119 (NKCD). Cys186 is modified (cysteine methyl ester). A lipid anchor (S-geranylgeranyl cysteine) is attached at Cys186. Positions 187–189 (KML) are cleaved as a propeptide — removed in mature form.

Belongs to the small GTPase superfamily. Ras family.

It localises to the cell membrane. The enzyme catalyses GTP + H2O = GDP + phosphate + H(+). With respect to regulation, alternates between an inactive form bound to GDP and an active form bound to GTP. Activated by a guanine nucleotide-exchange factor (GEF) and inactivated by a GTPase-activating protein (GAP). Functionally, ras proteins bind GDP/GTP and possess intrinsic GTPase activity. Plays a role in eye development by regulating cell growth, survival of postmitotic ommatidial cells and differentiation of photoreceptor cells. During larval development, mediates Ptth/tor signaling leading to the production of ecdysone, a hormone required for the initiation of metamorphosis. The chain is Ras-like protein 1 from Drosophila virilis (Fruit fly).